Consider the following 850-residue polypeptide: PH domain-containing protein YHR131C (850 aa).

Positions 194-306 (RIHSDLVHRS…MYLSIGISVS (113 aa)) constitute a PH domain. Positions 324 to 338 (RRRRRRRRRRRRHTH) are enriched in basic residues. 5 disordered regions span residues 324-348 (RRRR…GSFS), 406-428 (SAAS…SGCS), 451-494 (SSRT…GVPV), 583-659 (EASI…TDDS), and 793-850 (TTKD…QITA). Residues 406 to 416 (SAASGESSDNS) are compositionally biased toward low complexity. Residues 417–428 (TLGSTRSLSGCS) are compositionally biased toward polar residues. Positions 479 to 489 (HHESSGGDHPE) are enriched in basic and acidic residues. The segment covering 605 to 619 (ESATDLSQSSRSLCL) has biased composition (polar residues). Acidic residues-rich tracts occupy residues 626–658 (INDD…DTDD) and 799–850 (DHGE…QITA).

Its subcellular location is the cytoplasm. The sequence is that of PH domain-containing protein YHR131C from Saccharomyces cerevisiae (strain ATCC 204508 / S288c) (Baker's yeast).